Consider the following 76-residue polypeptide: Conotoxin Bu28 (76 aa).

The N-terminal stretch at 1-24 (MTSVQSATCCCLLWLVLCVQLVTP) is a signal peptide. The propeptide occupies 25 to 39 (DSPATAQLSRHLTAR). Intrachain disulfides connect cysteine 50–cysteine 63 and cysteine 54–cysteine 65. Arginine 69 is subject to Arginine amide. Residues 71-76 (VVSSSI) constitute a propeptide that is removed on maturation.

It belongs to the conotoxin J superfamily. As to expression, expressed by the venom duct.

The protein localises to the secreted. Highly inhibits both nicotinic acetylcholine receptors (neuronal (alpha-3/beta-4) and muscular (alpha-1/beta-1/epsilon/delta) subtypes) and the voltage-gated potassium channel Kv1.6/KCNA6 subtype. The protein is Conotoxin Bu28 of Conus bullatus (Bubble cone).